Reading from the N-terminus, the 197-residue chain is RILP-like protein 2 (197 aa).

Residues 14-96 (EDEGALAKSP…KQEVEGLRRA (83 aa)) enclose the RH1 domain. Positions 65 to 153 (LEALVNEGSL…VQEELQCYRS (89 aa)) form a coiled coil. In terms of domain architecture, RH2 spans 119–184 (RPRFTLQELR…GNGEKEERTI (66 aa)).

As to quaternary structure, homodimer. Interacts (via N-terminus) with MYO5A, the interaction is required for its role in dendrite formation. Interacts with RAC1. Interacts with RAB8A; interaction is dependent on the phosphorylation of RAB8A on 'Thr-72'. Interacts with RAB10 and RAB12; interaction is dependent on the phosphorylation of 'Thr-73' on RAB10 and 'Ser-105' on RAB12.

The protein resides in the cytoplasm. It localises to the cytosol. The protein localises to the cytoskeleton. Its subcellular location is the microtubule organizing center. It is found in the centrosome. The protein resides in the cell projection. It localises to the cilium. Functionally, involved in cell shape and neuronal morphogenesis, positively regulating the establishment and maintenance of dendritic spines. Plays a role in cellular protein transport, including protein transport away from primary cilia. May function via activation of RAC1 and PAK1. The polypeptide is RILP-like protein 2 (Rilpl2) (Rattus norvegicus (Rat)).